A 148-amino-acid polypeptide reads, in one-letter code: Puroindoline-A (148 aa).

Residues 1–19 form the signal peptide; that stretch reads MKALFLIGLLALVASTAFA. The propeptide occupies 20–28; the sequence is QYSEVVGSY. Residues 147 to 148 constitute a propeptide, removed in mature form; that stretch reads YW.

Post-translationally, five disulfide bonds are present. In terms of tissue distribution, endosperm and aleurone layer of developing kernels. In the aleurone layer, mainly localized to starch granules and the surface of the plasma membrane, forming a uniform layer, also abundant in the intercellular space. In the endosperm, mainly localized to starch granules and the plasma membrane, but less abundant in the intercellular space. Not found in roots or coleoptiles.

The protein localises to the membrane. The protein resides in the secreted. Its subcellular location is the extracellular space. Its function is as follows. Acts as a membranotoxin, probably through its antibacterial and antifungal activities, contributing to the defense mechanism of the plant against predators. Forms monovalent cation-selective ion channels in membranes. Has antibacterial activity against the Gram-positive bacteria S.aureus and C.michiganensis, and the Gram-negative bacteria E.coli, P.syringae pv phaseoli, A.tumefaciens and E.carotovora subsp carotovora. Acts synergistically with PINB against bacteria. Contributes to grain texture and hardness. The chain is Puroindoline-A (PINA) from Triticum aestivum (Wheat).